The chain runs to 224 residues: MAIVDWPAHERPREKLLAHGPAALSDAELLAIFLRVGVPGKSAVDLARELLAHFGSLARLCHASQQEFSSINGMGPAKYAQLHALLEVARRALKEDFTQGQTFESAQSVKDFLRLTLGHRPHEVFACFFLDVRHRLIAWEELFRGTLTEARVYPREIAKRALHHNAAAVILAHNHPTGNTEPSESDVILTRELCRALAMLDVIVLDHMIVGRNHVYGFLEHGKM.

The region spanning threonine 102–methionine 224 is the MPN domain. Zn(2+)-binding residues include histidine 173, histidine 175, and aspartate 186. Residues histidine 173 to aspartate 186 carry the JAMM motif motif.

It belongs to the UPF0758 family.

The chain is UPF0758 protein Rpic_2712 from Ralstonia pickettii (strain 12J).